The chain runs to 261 residues: Aquaporin-8 (261 aa).

Residues 1–36 are Cytoplasmic-facing; it reads MSGEQTPMCSMDLPEVKVKTSMAGRCRVFWYEQYVQ. Residues 37 to 57 form a helical membrane-spanning segment; it reads PCIVELVGSALFIFIGCLSVI. Cysteine 53 bears the Cysteine persulfide mark. Position 53 is a cysteine sulfenic acid (-SOH) (cysteine 53). The Extracellular portion of the chain corresponds to 58–84; the sequence is ENSPNTGLLQPALAHGLALGLIIATLG. Residues 85–105 traverse the membrane as a helical segment; the sequence is NISGGHFNPAVSLAVTVIGGL. Residues 92-94 carry the NPA 1 motif; that stretch reads NPA. The Cytoplasmic segment spans residues 106–107; that stretch reads KT. A helical transmembrane segment spans residues 108–128; sequence MLLIPYWISQLFGGLIGAALA. The Extracellular portion of the chain corresponds to 129 to 156; it reads KVVSPEERFWNASGAAFAIVQEQEQVAE. A glycan (N-linked (GlcNAc...) asparagine) is linked at asparagine 139. Residues 157–177 traverse the membrane as a helical segment; sequence ALGIEIILTMLLVLAVCMGAV. Residues 178 to 183 lie on the Cytoplasmic side of the membrane; sequence NEKTMG. A helical membrane pass occupies residues 184–204; it reads PLAPFSIGFSVIVDILAGGSI. Over 205–228 the chain is Extracellular; it reads SGACMNPARAFGPAVMAGYWDFHW. The short motif at 210 to 212 is the NPA 2 element; the sequence is NPA. The chain crosses the membrane as a helical span at residues 229 to 249; it reads IYWLGPLLAGLFVGLLIRLLI. The Cytoplasmic segment spans residues 250 to 261; that stretch reads GDEKTRLILKSR.

Belongs to the MIP/aquaporin (TC 1.A.8) family. Sulfenylation at Cys-53(C53-SOH) when hydrogen peroxide flows through the AQP8 channel, making it susceptible to hydrogen sulfide produced by CBS. Post-translationally, persulfidation at Cys-53 is required to gate AQP8 channel; under stress condition, hydrogen peroxide accumulates in the cell leading to CBS activation that produces hydrogen sulfide inducing persulfidation of oxidized Cys-53 (C53-SOH). In terms of processing, N-glycosylated. Expressed in placenta. Highly expressed in the epithelial layer of gall-bladders. Expressed in heart, kidney, submandibular gland, liver, small intestine, colon, testes, and epididymis. In testes, expressed in spermatogenic cells.

It is found in the cell membrane. Its subcellular location is the mitochondrion inner membrane. The protein resides in the apical cell membrane. The protein localises to the basolateral cell membrane. It localises to the smooth endoplasmic reticulum membrane. It catalyses the reaction H2O(in) = H2O(out). It carries out the reaction urea(in) = urea(out). The enzyme catalyses NH4(+)(in) = NH4(+)(out). The catalysed reaction is H2O2(out) = H2O2(in). It catalyses the reaction formamide(out) = formamide(in). It carries out the reaction methylamine(out) = methylamine(in). Reversibly gated by a two-step sulfenylation-persulfidation process in cells undergoing diverse stresses. Functionally, channel that allows the facilitated permeation of water and uncharged molecules, such as hydrogen peroxide and the neutral form of ammonia (NH3), through cellular membranes such as plasma membrane, inner mitochondrial membrane and endoplasmic reticulum membrane of several tissues. The transport of ammonia neutral form induces a parallel transport of proton, at alkaline pH when the concentration of ammonia is high. However, it is unclear whether the transport of proton takes place via the aquaporin or via an endogenous pathway. Also, may transport ammonia analogs such as formamide and methylamine, a transport favourited at basic pH due to the increase of unprotonated (neutral) form, which is expected to favor diffusion. In vitro, may be also permeable to urea but not to glycerol. Does not transport urea or glycerol. The water transport mechanism is mercury- and copper-sensitive and passive in response to osmotic driving forces. At the canicular plasma membrane, mediates the osmotic transport of water toward the bile canaliculus and facilitates the cAMP-induced bile canalicular water secretion, a process involved in bile formation. In addition, mediates the hydrogen peroxide release from hepatocyte mitochondria that modulates the SREBF2-mediated cholesterol synthesis and facilitates the mitochondrial ammonia uptake which is metabolized into urea, mainly under glucagon stimulation. In B cells, transports the CYBB-generated hydrogen peroxide from the external leaflet of the plasma membrane to the cytosol to promote B cell activation and differentiation for signal amplification. In the small intestine and colon system, mediates water transport through mitochondria and apical membrane of epithelial cells. May play an important role in the adaptive response of proximal tubule cells to acidosis possibly facilitating mitochondrial ammonia transport. In Mus musculus (Mouse), this protein is Aquaporin-8.